Consider the following 479-residue polypeptide: Cardiolipin synthase A (479 aa).

2 helical membrane passes run 8–28 (FFGYVLGLVHLLGIIAALHAV) and 38–58 (IAWAMSLFFIPYFTLIPYLVF). PLD phosphodiesterase domains are found at residues 218-245 (VNFRNHRKIVVVDGVTGFIGGHNVGDEY) and 392-419 (QPGFLHQKVVLVDDEVSAIGSANLDNRS). Catalysis depends on residues His-223, Lys-225, Asp-230, His-397, Lys-399, and Asp-404.

It belongs to the phospholipase D family. Cardiolipin synthase subfamily. ClsA sub-subfamily.

The protein localises to the cell inner membrane. The catalysed reaction is 2 a 1,2-diacyl-sn-glycero-3-phospho-(1'-sn-glycerol) = a cardiolipin + glycerol. In terms of biological role, catalyzes the reversible phosphatidyl group transfer from one phosphatidylglycerol molecule to another to form cardiolipin (CL) (diphosphatidylglycerol) and glycerol. This Pseudomonas putida (strain W619) protein is Cardiolipin synthase A.